The following is a 99-amino-acid chain: Integration host factor subunit alpha (99 aa).

A disordered region spans residues 49–73; the sequence is FGNFDLRDKNQRPGRNPKTGEDIPI.

It belongs to the bacterial histone-like protein family. Heterodimer of an alpha and a beta chain.

Functionally, this protein is one of the two subunits of integration host factor, a specific DNA-binding protein that functions in genetic recombination as well as in transcriptional and translational control. In Serratia marcescens, this protein is Integration host factor subunit alpha (ihfA).